The primary structure comprises 644 residues: Exoribonuclease 2 (644 aa).

One can recognise an RNB domain in the interval 189–516 (RQDLTALNFV…NHRLLKAVIK (328 aa)). Positions 561–643 (NTRFAAEIID…ETRSIIARPA (83 aa)) constitute an S1 motif domain.

Belongs to the RNR ribonuclease family. RNase II subfamily.

Its subcellular location is the cytoplasm. The enzyme catalyses Exonucleolytic cleavage in the 3'- to 5'-direction to yield nucleoside 5'-phosphates.. Functionally, involved in mRNA degradation. Hydrolyzes single-stranded polyribonucleotides processively in the 3' to 5' direction. The polypeptide is Exoribonuclease 2 (Salmonella typhi).